The sequence spans 526 residues: GMP synthase [glutamine-hydrolyzing] (526 aa).

Residues 9–208 (RILILDFGSQ…VMDICGCETL (200 aa)) form the Glutamine amidotransferase type-1 domain. The active-site Nucleophile is the C86. Residues H182 and E184 contribute to the active site. A GMPS ATP-PPase domain is found at 209–401 (WTSSSIIEDA…LGLPYEMLYR (193 aa)). 236 to 242 (SGGVDSS) lines the ATP pocket.

As to quaternary structure, homodimer.

The enzyme catalyses XMP + L-glutamine + ATP + H2O = GMP + L-glutamate + AMP + diphosphate + 2 H(+). The protein operates within purine metabolism; GMP biosynthesis; GMP from XMP (L-Gln route): step 1/1. Catalyzes the synthesis of GMP from XMP. The protein is GMP synthase [glutamine-hydrolyzing] of Psychromonas ingrahamii (strain DSM 17664 / CCUG 51855 / 37).